Reading from the N-terminus, the 249-residue chain is 3-deoxy-D-manno-octulosonic acid kinase (249 aa).

Asp-175 is a catalytic residue.

The protein belongs to the protein kinase superfamily. KdkA/RfaP family.

The protein localises to the cell inner membrane. It catalyses the reaction an alpha-Kdo-(2-&gt;6)-lipid IVA + ATP = a 4-O-phospho-alpha-Kdo-(2-&gt;6)-lipid IVA + ADP + H(+). It participates in bacterial outer membrane biogenesis; LPS core biosynthesis. In terms of biological role, catalyzes the ATP-dependent phosphorylation of the 3-deoxy-D-manno-octulosonic acid (Kdo) residue in Kdo-lipid IV(A) at the 4-OH position. This chain is 3-deoxy-D-manno-octulosonic acid kinase, found in Xylella fastidiosa (strain M23).